The primary structure comprises 26 residues: Melittin (26 aa).

At Gly-1 the chain carries N-formylglycine; partial. Glu-26 is subject to Glutamic acid 1-amide.

The protein belongs to the melittin family. Monomer (in solution and for integration into membranes), homotetramer (in solution and potentially as a toroidal pore in membranes), and potenially homomultimer (as a toroidal pore in membranes). Expressed by the venom gland.

It is found in the secreted. The protein localises to the target cell membrane. In terms of biological role, main toxin of bee venom with strong hemolytic activity and antimicrobial activity. It has enhancing effects on bee venom phospholipase A2 activity. This amphipathic toxin binds to negatively charged membrane surface and forms pore by inserting into lipid bilayers inducing the leakage of ions and molecules and the enhancement of permeability that ultimately leads to cell lysis. It acts as a voltage-gated pore with higher selectivity for anions over cations. The ion conductance has been shown to be voltage-dependent. Self-association of melittin in membranes is promoted by high ionic strength, but not by the presence of negatively charged lipids. In vivo, intradermal injection into healthy human volunteers produce sharp pain sensation and an inflammatory response. It produces pain by activating primary nociceptor cells directly and indirectly due to its ability to activate plasma membrane phospholipase A2 and its pore-forming activity. This chain is Melittin (MELT), found in Apis dorsata (Giant honeybee).